The following is a 268-amino-acid chain: Tryptophan synthase alpha chain (268 aa).

Active-site proton acceptor residues include glutamate 49 and aspartate 60.

It belongs to the TrpA family. In terms of assembly, tetramer of two alpha and two beta chains.

The enzyme catalyses (1S,2R)-1-C-(indol-3-yl)glycerol 3-phosphate + L-serine = D-glyceraldehyde 3-phosphate + L-tryptophan + H2O. It functions in the pathway amino-acid biosynthesis; L-tryptophan biosynthesis; L-tryptophan from chorismate: step 5/5. Its function is as follows. The alpha subunit is responsible for the aldol cleavage of indoleglycerol phosphate to indole and glyceraldehyde 3-phosphate. The sequence is that of Tryptophan synthase alpha chain from Sodalis glossinidius (strain morsitans).